The chain runs to 485 residues: Bifunctional protein GlmU (485 aa).

The tract at residues 1–241 is pyrophosphorylase; the sequence is MSASDFSSAV…ARELAGVNDR (241 aa). Residues 13 to 16, Lys27, Gln84, and 89 to 90 contribute to the UDP-N-acetyl-alpha-D-glucosamine site; these read LAAG and GT. Asp114 lines the Mg(2+) pocket. 4 residues coordinate UDP-N-acetyl-alpha-D-glucosamine: Gly151, Glu166, Asn181, and Asn239. Asn239 is a Mg(2+) binding site. The interval 242–262 is linker; it reads VQLAEAGAELNRRTVIAAMRG. The segment at 263–485 is N-acetyltransferase; it reads GATIVDPATT…AAQNVHNQEG (223 aa). UDP-N-acetyl-alpha-D-glucosamine-binding residues include Arg344 and Lys362. His374 acts as the Proton acceptor in catalysis. UDP-N-acetyl-alpha-D-glucosamine is bound by residues Tyr377 and Asn388. Acetyl-CoA-binding positions include Ala391, 397–398, Ser416, and Ala434; that span reads NY. The segment at 465 to 485 is disordered; that stretch reads RPGTAAAQAAEAAQNVHNQEG. Residues 469 to 478 show a composition bias toward low complexity; the sequence is AAAQAAEAAQ.

This sequence in the N-terminal section; belongs to the N-acetylglucosamine-1-phosphate uridyltransferase family. It in the C-terminal section; belongs to the transferase hexapeptide repeat family. Homotrimer. Mg(2+) serves as cofactor.

It localises to the cytoplasm. The enzyme catalyses alpha-D-glucosamine 1-phosphate + acetyl-CoA = N-acetyl-alpha-D-glucosamine 1-phosphate + CoA + H(+). It carries out the reaction N-acetyl-alpha-D-glucosamine 1-phosphate + UTP + H(+) = UDP-N-acetyl-alpha-D-glucosamine + diphosphate. The protein operates within nucleotide-sugar biosynthesis; UDP-N-acetyl-alpha-D-glucosamine biosynthesis; N-acetyl-alpha-D-glucosamine 1-phosphate from alpha-D-glucosamine 6-phosphate (route II): step 2/2. It participates in nucleotide-sugar biosynthesis; UDP-N-acetyl-alpha-D-glucosamine biosynthesis; UDP-N-acetyl-alpha-D-glucosamine from N-acetyl-alpha-D-glucosamine 1-phosphate: step 1/1. It functions in the pathway bacterial outer membrane biogenesis; LPS lipid A biosynthesis. In terms of biological role, catalyzes the last two sequential reactions in the de novo biosynthetic pathway for UDP-N-acetylglucosamine (UDP-GlcNAc). The C-terminal domain catalyzes the transfer of acetyl group from acetyl coenzyme A to glucosamine-1-phosphate (GlcN-1-P) to produce N-acetylglucosamine-1-phosphate (GlcNAc-1-P), which is converted into UDP-GlcNAc by the transfer of uridine 5-monophosphate (from uridine 5-triphosphate), a reaction catalyzed by the N-terminal domain. The chain is Bifunctional protein GlmU from Corynebacterium glutamicum (strain ATCC 13032 / DSM 20300 / JCM 1318 / BCRC 11384 / CCUG 27702 / LMG 3730 / NBRC 12168 / NCIMB 10025 / NRRL B-2784 / 534).